Consider the following 701-residue polypeptide: SH3 domain-binding protein 1 (701 aa).

Over residues 1–10 (MMKRQLHRMR) the composition is skewed to basic residues. Disordered regions lie at residues 1 to 23 (MMKR…RTPE) and 160 to 182 (SQAT…HSHT). The interaction with CGNL1 stretch occupies residues 1–275 (MMKRQLHRMR…TATHFPRVYG (275 aa)). Residues 17–262 (SLGRTPETAE…RENHGQADHS (246 aa)) form the BAR domain. Phosphoserine is present on residues Ser175, Ser241, Ser262, and Ser264. Residues 276–469 (VSLATHLQEL…ALIQSADTLF (194 aa)) enclose the Rho-GAP domain. An interaction with CD2AP region spans residues 470–701 (PGDINFNVSG…RPRSLASETN (232 aa)). A disordered region spans residues 496–701 (SEELPSTAVP…RPRSLASETN (206 aa)). Residues 508–522 (ATTPAPAPAPAPAPA) show a composition bias toward pro residues. Ser544 and Ser550 each carry phosphoserine. Composition is skewed to pro residues over residues 570–579 (PARPTMPPPQ) and 587–596 (PPAPPLPPGS). Thr601 bears the Phosphothreonine mark. The short motif at 616–625 (APTVPPPLPP) is the SH3-binding element. 2 stretches are compositionally biased toward pro residues: residues 618 to 630 (TVPP…PPQP) and 641 to 652 (SPSPASPGPASP). Thr626 carries the phosphothreonine modification. Ser653 bears the Phosphoserine mark. The span at 666–677 (GAATAEGGAPEA) shows a compositional bias: low complexity. Pro residues predominate over residues 682-692 (PTPPAIPPQPR).

In terms of assembly, interacts with RAC1. Interacts with the exocyst via EXOC4 and EXOC8; required for the localization of both SH3BP1 and the exocyst to the leading edge of migrating cells. Interacts with CD2AP and CGNL1; probably part of a complex at cell junctions. Interacts with CAPZA1; recruits CAPZA1 to forming cell junctions. May interact with AFDN. Interacts with PLXND1; they dissociate upon SEMA3E binding to PLXND1 allowing SH3BP1 to transduce downstream signal through RAC1 inactivation. Interacts with ABL1, GRB2 and SRC (via SH3 domain).

It localises to the cell projection. It is found in the cell junction. The protein resides in the tight junction. The protein localises to the adherens junction. Its subcellular location is the phagocytic cup. It localises to the nucleus. It is found in the cytoplasm. The protein resides in the cytosol. Its function is as follows. GTPase activating protein (GAP) which specifically converts GTP-bound Rho-type GTPases including RAC1 and CDC42 in their inactive GDP-bound form. By specifically inactivating RAC1 at the leading edge of migrating cells, it regulates the spatiotemporal organization of cell protrusions which is important for proper cell migration. Also negatively regulates CDC42 in the process of actin remodeling and the formation of epithelial cell junctions. Through its GAP activity toward RAC1 and/or CDC42 plays a specific role in phagocytosis of large particles. Specifically recruited by a PI3 kinase/PI3K-dependent mechanism to sites of large particles engagement, inactivates RAC1 and/or CDC42 allowing the reorganization of the underlying actin cytoskeleton required for engulfment. It also plays a role in angiogenesis and the process of repulsive guidance as part of a semaphorin-plexin signaling pathway. Following the binding of PLXND1 to extracellular SEMA3E it dissociates from PLXND1 and inactivates RAC1, inducing the intracellular reorganization of the actin cytoskeleton and the collapse of cells. In Homo sapiens (Human), this protein is SH3 domain-binding protein 1.